Reading from the N-terminus, the 216-residue chain is 3,4-dihydroxy-2-butanone 4-phosphate synthase (216 aa).

D-ribulose 5-phosphate contacts are provided by residues 33-34, aspartate 38, 146-150, and glutamate 170; these read RE and RRGHT. Glutamate 34 contacts Mg(2+). Histidine 149 is a Mg(2+) binding site.

It belongs to the DHBP synthase family. In terms of assembly, homodimer. Mg(2+) is required as a cofactor. Requires Mn(2+) as cofactor.

The enzyme catalyses D-ribulose 5-phosphate = (2S)-2-hydroxy-3-oxobutyl phosphate + formate + H(+). It participates in cofactor biosynthesis; riboflavin biosynthesis; 2-hydroxy-3-oxobutyl phosphate from D-ribulose 5-phosphate: step 1/1. In terms of biological role, catalyzes the conversion of D-ribulose 5-phosphate to formate and 3,4-dihydroxy-2-butanone 4-phosphate. The polypeptide is 3,4-dihydroxy-2-butanone 4-phosphate synthase (Pseudomonas putida (strain ATCC 47054 / DSM 6125 / CFBP 8728 / NCIMB 11950 / KT2440)).